The sequence spans 116 residues: Vesicle-associated membrane protein 2 (116 aa).

The disordered stretch occupies residues 1-28 (MSATAATVPPAAPAGEGGPPAPPPNLTS). Position 2 is an N-acetylserine (Ser2). The Cytoplasmic segment spans residues 2-94 (SATAATVPPA…KRKYWWKNLK (93 aa)). One can recognise a v-SNARE coiled-coil homology domain in the interval 31 to 91 (RLQQTQAQVD…AKLKRKYWWK (61 aa)). The required for interaction with SEPT8 stretch occupies residues 92–116 (NLKMMIILGVICAIILIIIIVYFST). A helical; Anchor for type IV membrane protein transmembrane segment spans residues 95–114 (MMIILGVICAIILIIIIVYF). The Vesicular segment spans residues 115-116 (ST).

It belongs to the synaptobrevin family. As to quaternary structure, part of the SNARE core complex containing SNAP25, VAMP2 and STX1A; this complex constitutes the basic catalytic machinery of the complex neurotransmitter release apparatus. Recruited to the SNARE complex following binding of the SNARE complex component STX1A to STXBP1. This complex binds to CPLX1. Interacts with VAPA and VAPB. Interacts (via N-terminus) with KCNB1 (via N-terminus and C-terminus); stimulates the channel inactivation rate of KCNB1. Interacts with POPDC1 and STX4. Interacts with WDFY2, PRKCZ and PRKCI. Forms a complex with WDFY2 and PRKCZ. Interacts with SEPT8; the interaction inhibits interaction of VAMP2 with SYP. Interacts with SYP; the interaction is inhibited by interaction with SEPT8. Interacts with PICALM. Interacts with alpha-synuclein/SNCA. Interacts with STX3 isoform 3B. Post-translationally, phosphorylated by PRKCZ in vitro and this phosphorylation is increased in the presence of WDFY2. In terms of processing, (Microbial infection) Targeted and hydrolyzed by C.botulinum neurotoxin type B (BoNT/B, botB); 20 hours after treatment of spinal cord cells almost all the protein has been digested. BoNT/B hydrolyzes the 76-Gln-|-Phe-77 bond and inhibits neurotransmitter release. (Microbial infection) Targeted and hydrolyzed by C.tetani toxin (tetX); 20 hours after treatment of spinal cord cells almost all the protein has been digested. Tetanus toxin hydrolyzes the 76-Gln-|-Phe-77 bond and inhibits neurotransmitter release. Expressed in the outer plexiform layer of the retina (at protein level).

The protein localises to the cytoplasmic vesicle. The protein resides in the secretory vesicle. It is found in the synaptic vesicle membrane. Its subcellular location is the cell membrane. Functionally, involved in the targeting and/or fusion of transport vesicles to their target membrane. Major SNARE protein of synaptic vesicles which mediates fusion of synaptic vesicles to release neurotransmitters. Essential for fast vesicular exocytosis and activity-dependent neurotransmitter release as well as fast endocytosis that mediates rapid reuse of synaptic vesicles. Modulates the gating characteristics of the delayed rectifier voltage-dependent potassium channel KCNB1. The protein is Vesicle-associated membrane protein 2 (Vamp2) of Mus musculus (Mouse).